The primary structure comprises 345 residues: Flap endonuclease 1 (345 aa).

Residues 1–103 are N-domain; the sequence is MGIKQLSKLL…KELEKRKERR (103 aa). Aspartate 34 lines the Mg(2+) pocket. Arginine 47 and arginine 69 together coordinate DNA. Mg(2+)-binding residues include aspartate 85, glutamate 157, glutamate 159, aspartate 178, and aspartate 180. Residues 121–252 form an I-domain region; that stretch reads LMEMYDKRKT…KKALGLIKKH (132 aa). Residue glutamate 157 participates in DNA binding. DNA is bound by residues glycine 230 and aspartate 232. Mg(2+) is bound at residue aspartate 232. Residues 333–341 are interaction with PCNA; it reads TQGRLDCFI.

It belongs to the XPG/RAD2 endonuclease family. FEN1 subfamily. As to quaternary structure, interacts with PCNA. Three molecules of FEN1 bind to one PCNA trimer with each molecule binding to one PCNA monomer. PCNA stimulates the nuclease activity without altering cleavage specificity. It depends on Mg(2+) as a cofactor. Phosphorylated. Phosphorylation upon DNA damage induces relocalization to the nuclear plasma.

Its subcellular location is the nucleus. It is found in the nucleolus. The protein localises to the nucleoplasm. The protein resides in the mitochondrion. Structure-specific nuclease with 5'-flap endonuclease and 5'-3' exonuclease activities involved in DNA replication and repair. During DNA replication, cleaves the 5'-overhanging flap structure that is generated by displacement synthesis when DNA polymerase encounters the 5'-end of a downstream Okazaki fragment. It enters the flap from the 5'-end and then tracks to cleave the flap base, leaving a nick for ligation. Also involved in the long patch base excision repair (LP-BER) pathway, by cleaving within the apurinic/apyrimidinic (AP) site-terminated flap. Acts as a genome stabilization factor that prevents flaps from equilibrating into structures that lead to duplications and deletions. Also possesses 5'-3' exonuclease activity on nicked or gapped double-stranded DNA, and exhibits RNase H activity. Also involved in replication and repair of rDNA and in repairing mitochondrial DNA. The polypeptide is Flap endonuclease 1 (Encephalitozoon cuniculi (strain GB-M1) (Microsporidian parasite)).